Here is a 193-residue protein sequence, read N- to C-terminus: ATP-dependent Clp protease proteolytic subunit (193 aa).

S97 acts as the Nucleophile in catalysis. H122 is an active-site residue.

This sequence belongs to the peptidase S14 family. In terms of assembly, fourteen ClpP subunits assemble into 2 heptameric rings which stack back to back to give a disk-like structure with a central cavity, resembling the structure of eukaryotic proteasomes.

Its subcellular location is the cytoplasm. It carries out the reaction Hydrolysis of proteins to small peptides in the presence of ATP and magnesium. alpha-casein is the usual test substrate. In the absence of ATP, only oligopeptides shorter than five residues are hydrolyzed (such as succinyl-Leu-Tyr-|-NHMec, and Leu-Tyr-Leu-|-Tyr-Trp, in which cleavage of the -Tyr-|-Leu- and -Tyr-|-Trp bonds also occurs).. Its function is as follows. Cleaves peptides in various proteins in a process that requires ATP hydrolysis. Has a chymotrypsin-like activity. Plays a major role in the degradation of misfolded proteins. This Fusobacterium nucleatum subsp. nucleatum (strain ATCC 25586 / DSM 15643 / BCRC 10681 / CIP 101130 / JCM 8532 / KCTC 2640 / LMG 13131 / VPI 4355) protein is ATP-dependent Clp protease proteolytic subunit.